The chain runs to 230 residues: Porin OmpL (230 aa).

A signal peptide spans 1 to 20; the sequence is MKSLNTLVILTSVISTSVFA.

The protein belongs to the oligogalacturonate-specific porin KdgM (TC 1.B.35) family. OmpL subfamily.

The protein localises to the cell outer membrane. Its function is as follows. Outer membrane channel protein that allows an efficient diffusion of low-molecular-weight solutes such as small sugars and tetraglycine. However, the specific substrate recognized by the OmpL channel is unknown. This is Porin OmpL (ompL) from Salmonella typhi.